A 422-amino-acid polypeptide reads, in one-letter code: Probable tRNA pseudouridine synthase D (422 aa).

D83 (nucleophile) is an active-site residue. Residues 164 to 386 (GFPNYFGSQR…AGGRRELLIK (223 aa)) form the TRUD domain.

This sequence belongs to the pseudouridine synthase TruD family.

It carries out the reaction uridine(13) in tRNA = pseudouridine(13) in tRNA. Could be responsible for synthesis of pseudouridine from uracil-13 in transfer RNAs. The chain is Probable tRNA pseudouridine synthase D from Thermococcus sibiricus (strain DSM 12597 / MM 739).